A 439-amino-acid polypeptide reads, in one-letter code: Ribosomal protein uS12 methylthiotransferase RimO (439 aa).

Residues 7–122 enclose the MTTase N-terminal domain; sequence QTIAVIALGC…LPDLVFGKNF (116 aa). 6 residues coordinate [4Fe-4S] cluster: cysteine 16, cysteine 52, cysteine 85, cysteine 155, cysteine 159, and cysteine 162. Residues 141 to 369 enclose the Radical SAM core domain; the sequence is SSTIPSAYLK…NAQYNIFQAK (229 aa).

It belongs to the methylthiotransferase family. RimO subfamily. The cofactor is [4Fe-4S] cluster.

It is found in the cytoplasm. It catalyses the reaction L-aspartate(89)-[ribosomal protein uS12]-hydrogen + (sulfur carrier)-SH + AH2 + 2 S-adenosyl-L-methionine = 3-methylsulfanyl-L-aspartate(89)-[ribosomal protein uS12]-hydrogen + (sulfur carrier)-H + 5'-deoxyadenosine + L-methionine + A + S-adenosyl-L-homocysteine + 2 H(+). Catalyzes the methylthiolation of an aspartic acid residue of ribosomal protein uS12. The polypeptide is Ribosomal protein uS12 methylthiotransferase RimO (Endomicrobium trichonymphae).